Reading from the N-terminus, the 324-residue chain is MADQVEEKKRIKTVKDLSGVGQAVLNKLTEAGYSTLESIAVASPQDLSTAAGIPITTAQRIIKEARDALDIRFKTALEIEQERASVKKITTGSQALDGLLGGGIETRTMTELFGEFGSGKTQICHQVSVNVQLPPERGGLSGKALYIDTEGTFRTERIKAMASALGLEPKEVLQNIMSIRAINTDHQIAIVEELQDIIAKDNSIKLVVVDSITSHFRAEYSGRENLAVRQQKLNRHLHQLVRLAEIYDLAVIVTNQVMARPDMFYGDPTVAVGGHTLYHVPGIRVQIKKSRGNRRIARMVDAPHLPEGEVVFSITNTGIRDAEE.

114–121 is an ATP binding site; sequence GEFGSGKT.

It belongs to the eukaryotic RecA-like protein family.

Functionally, involved in DNA repair and in homologous recombination. Binds and assemble on single-stranded DNA to form a nucleoprotein filament. Hydrolyzes ATP in a ssDNA-dependent manner and promotes DNA strand exchange between homologous DNA molecules. The polypeptide is DNA repair and recombination protein RadA (Metallosphaera sedula (strain ATCC 51363 / DSM 5348 / JCM 9185 / NBRC 15509 / TH2)).